Here is a 144-residue protein sequence, read N- to C-terminus: Large ribosomal subunit protein uL15 (144 aa).

Positions 1–16 are enriched in basic residues; that stretch reads MVVRKEKKSRKYRGYR. The interval 1-35 is disordered; the sequence is MVVRKEKKSRKYRGYRTHGWGTKGQHRDRGAQGGR.

Belongs to the universal ribosomal protein uL15 family. In terms of assembly, part of the 50S ribosomal subunit.

Binds to the 23S rRNA. The protein is Large ribosomal subunit protein uL15 of Sulfolobus acidocaldarius (strain ATCC 33909 / DSM 639 / JCM 8929 / NBRC 15157 / NCIMB 11770).